Consider the following 313-residue polypeptide: tRNA dimethylallyltransferase (313 aa).

Residue G11–T18 participates in ATP binding. T13 to T18 is a substrate binding site. Interaction with substrate tRNA regions lie at residues D36–L39, Q160–R164, and R243–R248.

This sequence belongs to the IPP transferase family. In terms of assembly, monomer. Requires Mg(2+) as cofactor.

The catalysed reaction is adenosine(37) in tRNA + dimethylallyl diphosphate = N(6)-dimethylallyladenosine(37) in tRNA + diphosphate. Catalyzes the transfer of a dimethylallyl group onto the adenine at position 37 in tRNAs that read codons beginning with uridine, leading to the formation of N6-(dimethylallyl)adenosine (i(6)A). The protein is tRNA dimethylallyltransferase of Neisseria meningitidis serogroup B (strain ATCC BAA-335 / MC58).